The following is a 441-amino-acid chain: Putative cytochrome P450 138 (441 aa).

Cys-388 contacts heme.

The protein belongs to the cytochrome P450 family. Heme is required as a cofactor.

The sequence is that of Putative cytochrome P450 138 (cyp138) from Mycobacterium bovis (strain ATCC BAA-935 / AF2122/97).